A 217-amino-acid chain; its full sequence is Ras-related protein Rab11B (217 aa).

21–28 contacts GTP; it reads GDSGVGKS. Positions 43 to 51 match the Effector region motif; the sequence is SKSTIGVEF. GTP is bound by residues 69–73 and 127–130; these read DTAGQ and NKAD. S-geranylgeranyl cysteine attachment occurs at residues Cys-214 and Cys-215.

Belongs to the small GTPase superfamily. Rab family.

The protein resides in the cell membrane. In Nicotiana tabacum (Common tobacco), this protein is Ras-related protein Rab11B (RAB11B).